Consider the following 551-residue polypeptide: Small ribosomal subunit protein bS1 (551 aa).

6 consecutive S1 motif domains span residues 21–83 (GALV…LSRE), 101–167 (GEMV…VSRR), 188–256 (GQEI…LGMK), 273–343 (NSRV…LGIK), 360–430 (DEKI…LGIK), and 447–516 (DAVI…VSHK).

The protein belongs to the bacterial ribosomal protein bS1 family.

Functionally, binds mRNA; thus facilitating recognition of the initiation point. It is needed to translate mRNA with a short Shine-Dalgarno (SD) purine-rich sequence. The polypeptide is Small ribosomal subunit protein bS1 (rpsA) (Coxiella burnetii (strain RSA 493 / Nine Mile phase I)).